The sequence spans 424 residues: UDP-N-acetylglucosamine 1-carboxyvinyltransferase (424 aa).

22 to 23 serves as a coordination point for phosphoenolpyruvate; that stretch reads KN. Arginine 93 contributes to the UDP-N-acetyl-alpha-D-glucosamine binding site. Residue cysteine 117 is the Proton donor of the active site. A 2-(S-cysteinyl)pyruvic acid O-phosphothioketal modification is found at cysteine 117. UDP-N-acetyl-alpha-D-glucosamine-binding positions include 122–126, 164–166, aspartate 307, and isoleucine 329; these read RPVDL and SVG.

Belongs to the EPSP synthase family. MurA subfamily.

The protein resides in the cytoplasm. The enzyme catalyses phosphoenolpyruvate + UDP-N-acetyl-alpha-D-glucosamine = UDP-N-acetyl-3-O-(1-carboxyvinyl)-alpha-D-glucosamine + phosphate. It participates in cell wall biogenesis; peptidoglycan biosynthesis. Cell wall formation. Adds enolpyruvyl to UDP-N-acetylglucosamine. The protein is UDP-N-acetylglucosamine 1-carboxyvinyltransferase of Haemophilus influenzae (strain ATCC 51907 / DSM 11121 / KW20 / Rd).